We begin with the raw amino-acid sequence, 284 residues long: Small ribosomal subunit protein uS2 (284 aa).

Over residues 250–272 (QELLAGATASPTAAGAAPGTPEA) the composition is skewed to low complexity. The interval 250-284 (QELLAGATASPTAAGAAPGTPEADIQTEPTAPQNP) is disordered.

The protein belongs to the universal ribosomal protein uS2 family.

The chain is Small ribosomal subunit protein uS2 from Mycobacterium sp. (strain KMS).